A 469-amino-acid chain; its full sequence is UDP-N-acetylmuramoylalanine--D-glutamate ligase (469 aa).

An ATP-binding site is contributed by 123-129 (GTNGKST).

It belongs to the MurCDEF family.

The protein resides in the cytoplasm. It catalyses the reaction UDP-N-acetyl-alpha-D-muramoyl-L-alanine + D-glutamate + ATP = UDP-N-acetyl-alpha-D-muramoyl-L-alanyl-D-glutamate + ADP + phosphate + H(+). It functions in the pathway cell wall biogenesis; peptidoglycan biosynthesis. Cell wall formation. Catalyzes the addition of glutamate to the nucleotide precursor UDP-N-acetylmuramoyl-L-alanine (UMA). This is UDP-N-acetylmuramoylalanine--D-glutamate ligase from Caulobacter sp. (strain K31).